The chain runs to 520 residues: Transactivator/viroplasmin protein (520 aa).

Residues 487 to 520 are disordered; the sequence is QNASADSGPKDGPPPTRSIVEKEDVPTTSSKQVD.

The protein belongs to the caulimoviridae viroplasmin family.

The protein resides in the host cytoplasm. In terms of biological role, enhances the ribosomal termination-reinitiation event leading to the translation of major open reading frames on the polycistronic viral RNAs. In Arabidopsis thaliana (Mouse-ear cress), this protein is Transactivator/viroplasmin protein.